A 311-amino-acid chain; its full sequence is NAD kinase (311 aa).

Asp-67 functions as the Proton acceptor in the catalytic mechanism. NAD(+) is bound by residues 67–68, Arg-72, 140–141, Arg-151, Asp-170, 181–186, and Gln-240; these read DG, ND, and TAYSLS. A compositionally biased stretch (basic and acidic residues) spans 278–287; that stretch reads LKEGGSRQDD. A disordered region spans residues 278 to 311; that stretch reads LKEGGSRQDDENPAATVNPETDSKYPHSHPGSTG.

Belongs to the NAD kinase family. The cofactor is a divalent metal cation.

It is found in the cytoplasm. It carries out the reaction NAD(+) + ATP = ADP + NADP(+) + H(+). Functionally, involved in the regulation of the intracellular balance of NAD and NADP, and is a key enzyme in the biosynthesis of NADP. Catalyzes specifically the phosphorylation on 2'-hydroxyl of the adenosine moiety of NAD to yield NADP. This is NAD kinase from Moorella thermoacetica (strain ATCC 39073 / JCM 9320).